The following is a 377-amino-acid chain: Nitric oxide reductase FlRd-NAD(+) reductase (377 aa).

This sequence belongs to the FAD-dependent oxidoreductase family. FAD serves as cofactor.

It is found in the cytoplasm. The catalysed reaction is 2 reduced [nitric oxide reductase rubredoxin domain] + NAD(+) + H(+) = 2 oxidized [nitric oxide reductase rubredoxin domain] + NADH. It functions in the pathway nitrogen metabolism; nitric oxide reduction. Its function is as follows. One of at least two accessory proteins for anaerobic nitric oxide (NO) reductase. Reduces the rubredoxin moiety of NO reductase. In Shigella boydii serotype 18 (strain CDC 3083-94 / BS512), this protein is Nitric oxide reductase FlRd-NAD(+) reductase.